The primary structure comprises 309 residues: tRNA dimethylallyltransferase (309 aa).

11–18 (GPTASGKS) serves as a coordination point for ATP. 13–18 (TASGKS) is a binding site for substrate. Interaction with substrate tRNA regions lie at residues 36–39 (DSMQ) and 160–164 (QRLLR).

It belongs to the IPP transferase family. In terms of assembly, monomer. Mg(2+) serves as cofactor.

It catalyses the reaction adenosine(37) in tRNA + dimethylallyl diphosphate = N(6)-dimethylallyladenosine(37) in tRNA + diphosphate. Its function is as follows. Catalyzes the transfer of a dimethylallyl group onto the adenine at position 37 in tRNAs that read codons beginning with uridine, leading to the formation of N6-(dimethylallyl)adenosine (i(6)A). In Caulobacter sp. (strain K31), this protein is tRNA dimethylallyltransferase.